Consider the following 513-residue polypeptide: Probable DNA ligase (513 aa).

ATP is bound at residue Glu213. Lys215 serves as the catalytic N6-AMP-lysine intermediate. Positions 220, 235, 264, 304, 376, and 382 each coordinate ATP.

Belongs to the ATP-dependent DNA ligase family. The cofactor is Mg(2+).

It catalyses the reaction ATP + (deoxyribonucleotide)n-3'-hydroxyl + 5'-phospho-(deoxyribonucleotide)m = (deoxyribonucleotide)n+m + AMP + diphosphate.. Functionally, DNA ligase that seals nicks in double-stranded DNA during DNA replication, DNA recombination and DNA repair. The sequence is that of Probable DNA ligase from Anaeromyxobacter sp. (strain K).